The primary structure comprises 130 residues: Small ribosomal subunit protein uS9 (130 aa).

Belongs to the universal ribosomal protein uS9 family.

The protein is Small ribosomal subunit protein uS9 of Phytoplasma australiense.